Reading from the N-terminus, the 524-residue chain is Tubulin-specific chaperone E (524 aa).

At serine 2 the chain carries N-acetylserine. In terms of domain architecture, CAP-Gly spans 27–71 (GAVPPVAGLWLGVEWDNPERGKHDGSHEGTMYFKCRHPTGGSFVR). LRR repeat units lie at residues 154–175 (NIRVVNLSKNLLSTWDEVVLIA), 180–201 (DLEALDLSENKLQFPSDSPTLT), 206–227 (TLKTLVLNKTGITWTEVLHCAP), 231–253 (VLEELYLKSNNISISERPVNVLQ), 254–275 (KMRLLDLSSNPSIDESQLSLIA), 279–300 (RLEHLVLSDIGLSSIHFPDAEI), and 309–330 (ALKYLIVNDNQISEWSFINELD). The region spanning 343–381 (NPLSKADKAEEIIIAKIAQLRTLNRCQILPEERRGAELD) is the LRRCT domain. Lysine 460 carries the N6-acetyllysine modification. Phosphoserine is present on serine 492.

Belongs to the TBCE family. Supercomplex made of cofactors A to E. Cofactors A and D function by capturing and stabilizing tubulin in a quasi-native conformation. Cofactor E binds to the cofactor D-tubulin complex; interaction with cofactor C then causes the release of tubulin polypeptides that are committed to the native state. Cofactors B and E can form a heterodimer which binds to alpha-tubulin and enhances their ability to dissociate tubulin heterodimers. Interacts with TBCD. In terms of tissue distribution, ubiquitously expressed.

It localises to the cytoplasm. Its subcellular location is the cytoskeleton. Functionally, tubulin-folding protein; involved in the second step of the tubulin folding pathway and in the regulation of tubulin heterodimer dissociation. Required for correct organization of microtubule cytoskeleton and mitotic splindle, and maintenance of the neuronal microtubule network. The protein is Tubulin-specific chaperone E (Tbce) of Mus musculus (Mouse).